A 128-amino-acid chain; its full sequence is Sulfurtransferase TusD (128 aa).

Cys78 acts as the Cysteine persulfide intermediate in catalysis.

The protein belongs to the DsrE/TusD family. Heterohexamer, formed by a dimer of trimers. The hexameric TusBCD complex contains 2 copies each of TusB, TusC and TusD. The TusBCD complex interacts with TusE.

The protein resides in the cytoplasm. Part of a sulfur-relay system required for 2-thiolation of 5-methylaminomethyl-2-thiouridine (mnm(5)s(2)U) at tRNA wobble positions. Accepts sulfur from TusA and transfers it in turn to TusE. The protein is Sulfurtransferase TusD of Salmonella arizonae (strain ATCC BAA-731 / CDC346-86 / RSK2980).